The sequence spans 448 residues: Rhodopsin (448 aa).

Topologically, residues 2-33 (GRDLRDNETWWYNPSIVVHPHWREFDQVPDAV) are extracellular. An N-linked (GlcNAc...) asparagine glycan is attached at asparagine 8. Residues 34–58 (YYSLGIFIGICGIIGCGGNGIVIYL) form a helical membrane-spanning segment. Residues 59 to 70 (FTKTKSLQTPAN) lie on the Cytoplasmic side of the membrane. The chain crosses the membrane as a helical span at residues 71 to 97 (MFIINLAFSDFTFSLVNGFPLMTISCF). Residues 98–109 (LKKWIFGFAACK) lie on the Extracellular side of the membrane. The cysteines at positions 108 and 186 are disulfide-linked. A helical membrane pass occupies residues 110–131 (VYGFIGGIFGFMSIMTMAMISI). Residues 132 to 151 (DRYNVIGRPMAASKKMSHRR) are Cytoplasmic-facing. The chain crosses the membrane as a helical span at residues 152-172 (AFIMIIFVWLWSVLWAIGPIF). Residues 173 to 199 (GWGAYTLEGVLCNCSFDYISRDSTTRS) are Extracellular-facing. A helical membrane pass occupies residues 200–224 (NILCMFILGFFGPILIIFFCYFNIV). The Cytoplasmic portion of the chain corresponds to 225 to 261 (MSVSNHEKEMAAMAKRLNAKELRKAQAGANAEMRLAK). A helical transmembrane segment spans residues 262-283 (ISIVIVSQFLLSWSPYAVVALL). The Extracellular portion of the chain corresponds to 284–293 (AQFGPLEWVT). The chain crosses the membrane as a helical span at residues 294 to 315 (PYAAQLPVMFAKASAIHNPMIY). Position 305 is an N6-(retinylidene)lysine (lysine 305). The Cytoplasmic portion of the chain corresponds to 316–448 (SVSHPKFREA…QGVDNQAYQA (133 aa)). S-palmitoyl cysteine attachment occurs at residues cysteine 336 and cysteine 337. Residues 343–352 (ETEDDKDAET) show a composition bias toward acidic residues. Residues 343–448 (ETEDDKDAET…QGVDNQAYQA (106 aa)) are disordered. The segment covering 359–391 (SSDAAPSADAAQMKEMMAMMQKMQQQQAAYPPQ) has biased composition (low complexity). The segment covering 392–437 (GYAPPPQGYPPQGYPPQGYPPQGYPPQGYPPPPQGAPPQGAPPAAP) has biased composition (pro residues).

Belongs to the G-protein coupled receptor 1 family. Opsin subfamily. Post-translationally, contains one covalently linked retinal chromophore. Upon light absorption, the covalently bound 11-cis-retinal is converted to all-trans-retinal. After hydrolysis of the Schiff base and release of the covalently bound all-trans-retinal, active rhodopsin is regenerated by binding of a fresh molecule of 11-cis-retinal. Retina, rhabdomere membrane of photoreceptor cells (at protein level).

The protein resides in the cell projection. It localises to the rhabdomere membrane. In terms of biological role, photoreceptor required for image-forming vision at low light intensity. Light-induced isomerization of 11-cis to all-trans retinal triggers a conformational change that activates signaling via G-proteins. Signaling mediates the activation of phospholipase C. Subsequent receptor phosphorylation mediates displacement of the bound G-protein alpha subunit by arrestin and terminates signaling. The protein is Rhodopsin (RHO) of Todarodes pacificus (Japanese flying squid).